The chain runs to 507 residues: MLLHDVAITSMDVAATSSRLTKVARIAALLHRAAPDTQLVTIIVSWLSGELPQRHIGVGWAALRSLPPPAPQPALTVTGVDATLSKIGTLSGKGSQAQRAALVAELFSAATEAEQTFLLRLLGGELRQGAKGGIMADAVAQAAGLPAATVQRAAMLGGDLAAAAAAGLSGAALDTFTLRVGRPIGPMLAQTATSVHDALERHGGTTIFEAKLDGARVQIHRANDQVRIYTRSLDDVTARLPEVVEATLALPVRDLVADGEAIALCPDNRPQRFQVTASRFGRSVDVAAARATQPLSVFFFDILHRDGTDLLEAPTTERLAALDALVPARHRVDRLITSDPTDAANFLDATLAAGHEGVMAKAPAARYLAGRRGAGWLKVKPVHTLDLVVLAVEWGSGRRRGKLSNIHLGARDPATGGFVMVGKTFKGMTDAMLDWQTTRFHEIAVGPTDGYVVQLRPEQVVEVALDGVQRSSRYPGGLALRFARVVRYRADKDPAEADTIDAVRALY.

Glu-209 serves as a coordination point for ATP. The N6-AMP-lysine intermediate role is filled by Lys-211. ATP is bound by residues Arg-216, Arg-231, Glu-260, Phe-300, Arg-372, and Lys-378.

The protein belongs to the ATP-dependent DNA ligase family. Mg(2+) serves as cofactor.

The catalysed reaction is ATP + (deoxyribonucleotide)n-3'-hydroxyl + 5'-phospho-(deoxyribonucleotide)m = (deoxyribonucleotide)n+m + AMP + diphosphate.. DNA ligase that seals nicks in double-stranded DNA during DNA replication, DNA recombination and DNA repair. This is Probable DNA ligase from Mycobacterium bovis (strain ATCC BAA-935 / AF2122/97).